The following is a 531-amino-acid chain: MPTDCISYQKSGYFSKLIVDYLDKKPELKELYNYFPSIENFKHQIEEKNHNFKNNDKRKILVDALKKQYTNFEISELTQKNIVLLENEKTFTITTGHQLNLFTGPLYFLYKIVSTINLCKELKRNYPEYNFVPIYWMATEDHDFEEINHFNFKGKKLSWNTASKGAVGRLSTKSLTNFFTVFKAELGLSNNAEYIKKLFSDSYLQHSNLADATRFLANKLFGKYGLVILDGDAAALKKQFIPYIKDELLYQNSNKKVLESIAKLKDYSIQVNPREINLFYIEANLRERIIYENGNYKVNNTFISFSETEILKLVDANSEKFSPNVILRPLYQEVILPNLAYIGGGGEIAYWLELKAMFDFHKVTFPILLVRNSAVLINEKQEKNRQKLNITWQELFLKQQVLIDAKTKEYSEIKIDFSEQKAHLKKQFEALHQIALKTDKSFSGAVKAQEKKQTKGLDNLEKRLLKAEKKMHSEKLKKIIELQNNLFPNESLQERKSNFSEIYVEIGEELINKISDQLHPLAATFSIIKHA.

A coiled-coil region spans residues 447 to 481; it reads KAQEKKQTKGLDNLEKRLLKAEKKMHSEKLKKIIE.

The protein belongs to the BshC family.

The sequence is that of Putative cysteine ligase BshC from Flavobacterium psychrophilum (strain ATCC 49511 / DSM 21280 / CIP 103535 / JIP02/86).